We begin with the raw amino-acid sequence, 480 residues long: Aspartyl/glutamyl-tRNA(Asn/Gln) amidotransferase subunit B (480 aa).

It belongs to the GatB/GatE family. GatB subfamily. As to quaternary structure, heterotrimer of A, B and C subunits.

The catalysed reaction is L-glutamyl-tRNA(Gln) + L-glutamine + ATP + H2O = L-glutaminyl-tRNA(Gln) + L-glutamate + ADP + phosphate + H(+). It carries out the reaction L-aspartyl-tRNA(Asn) + L-glutamine + ATP + H2O = L-asparaginyl-tRNA(Asn) + L-glutamate + ADP + phosphate + 2 H(+). Functionally, allows the formation of correctly charged Asn-tRNA(Asn) or Gln-tRNA(Gln) through the transamidation of misacylated Asp-tRNA(Asn) or Glu-tRNA(Gln) in organisms which lack either or both of asparaginyl-tRNA or glutaminyl-tRNA synthetases. The reaction takes place in the presence of glutamine and ATP through an activated phospho-Asp-tRNA(Asn) or phospho-Glu-tRNA(Gln). In Streptococcus thermophilus (strain ATCC BAA-491 / LMD-9), this protein is Aspartyl/glutamyl-tRNA(Asn/Gln) amidotransferase subunit B.